A 74-amino-acid polypeptide reads, in one-letter code: Putative membrane protein insertion efficiency factor (74 aa).

It belongs to the UPF0161 family.

Its subcellular location is the cell inner membrane. Its function is as follows. Could be involved in insertion of integral membrane proteins into the membrane. The sequence is that of Putative membrane protein insertion efficiency factor from Endomicrobium trichonymphae.